The following is a 221-amino-acid chain: Abscisic acid receptor PYL1 (221 aa).

Low complexity predominate over residues 1-11; it reads MANSESSSSPV. Residues 1–22 are disordered; it reads MANSESSSSPVNEEENSQRIST. Position 2 is an N-acetylalanine (Ala2). Residues 50–206 form an START-like region; sequence YQLGNGRCSS…NLQKLASITE (157 aa). Residues Lys86, 116–121, 143–149, and Glu171 each bind abscisate; these read ANTSRE and RLRNYKS. A Gate loop motif is present at residues 112–116; the sequence is SGLPA. The Latch loop signature appears at 142–144; that stretch reads HRL.

Belongs to the PYR/PYL/RCAR abscisic acid intracellular receptor family. In terms of assembly, homodimer. Binds ABA on one subunit only. Interacts with HAB1, ABI1 and ABI2, and possibly with other PP2Cs. Binds to CARs protein in an ABA-independent manner, both at the plasma membrane and in the nucleus. Interacts directly with CAR1 and CAR4.

It is found in the cytoplasm. The protein resides in the nucleus. It localises to the cell membrane. Its function is as follows. Receptor for abscisic acid (ABA) required for ABA-mediated responses such as stomatal closure and germination inhibition. Inhibits the activity of group-A protein phosphatases type 2C (PP2Cs) when activated by ABA. Can be activated by both (-)-ABA and (+)-ABA. The protein is Abscisic acid receptor PYL1 (PYL1) of Arabidopsis thaliana (Mouse-ear cress).